A 118-amino-acid chain; its full sequence is Mediator of RNA polymerase II transcription subunit 11 (118 aa).

The protein belongs to the Mediator complex subunit 11 family. Component of the Mediator complex.

It localises to the nucleus. In terms of biological role, component of the Mediator complex, a coactivator involved in the regulated transcription of nearly all RNA polymerase II-dependent genes. Mediator functions as a bridge to convey information from gene-specific regulatory proteins to the basal RNA polymerase II transcription machinery. Mediator is recruited to promoters by direct interactions with regulatory proteins and serves as a scaffold for the assembly of a functional pre-initiation complex with RNA polymerase II and the general transcription factors. The polypeptide is Mediator of RNA polymerase II transcription subunit 11 (med11) (Xenopus tropicalis (Western clawed frog)).